We begin with the raw amino-acid sequence, 337 residues long: MNKLLILFLLLNAALTRQDNHASANNKPMLYNINSAPLYFEKFITQYNKQYKSEDEKKYRYNIFRHNIESINQKNSRNDSAVYKINRFADMPKNEIVIRHTGLASGELGLNFCETIVVDGPAQRQRPVSFDWRSMNKITSVKDQGMCGACWRFASLGALESQYAIKYDRLIDLSEQQLVDCDFVDMGCDGGLIHTAYEQIMKMGGVEQEFDYSYKAERQPCALKPHKFATGVRNCYRYVILNEERLEDLLRYVGPIAIAVDAVDLTDYYGGIVSFCENNGLNHAVLLVGYGVENNVPYWIIKNSWGSDYGEDGYVRVRRGVNSCGMINELASSAQVV.

The N-terminal stretch at 1 to 16 is a signal peptide; sequence MNKLLILFLLLNAALT. Positions 17–126 are cleaved as a propeptide — activation peptide; the sequence is RQDNHASANN…VVDGPAQRQR (110 aa). 3 disulfides stabilise this stretch: Cys-147-Cys-188, Cys-181-Cys-221, and Cys-276-Cys-324. Residue Cys-150 is part of the active site. Active-site residues include His-283 and Asn-303.

It belongs to the peptidase C1 family. Post-translationally, synthesized as an inactive proenzyme and activated by proteolytic removal of the inhibitory propeptide.

It carries out the reaction Endopeptidase of broad specificity, hydrolyzing substrates of both cathepsin L and cathepsin B.. Its function is as follows. Cysteine protease that plays an essential role in host liquefaction to facilitate horizontal transmission of the virus. May participate in the degradation of foreign protein expressed by the baculovirus system. This Lepidoptera (butterflies and moths) protein is Viral cathepsin (VCATH).